Reading from the N-terminus, the 140-residue chain is Smith-Magenis syndrome chromosomal region candidate gene 5 protein (140 aa).

The interval Cys-43–Ser-77 is disordered. Over residues Gln-49 to Ser-58 the composition is skewed to pro residues.

As to expression, widely expressed.

The polypeptide is Smith-Magenis syndrome chromosomal region candidate gene 5 protein (SMCR5) (Homo sapiens (Human)).